We begin with the raw amino-acid sequence, 254 residues long: Probable phosphatase Shew185_1467 (254 aa).

Zn(2+) contacts are provided by histidine 8, histidine 10, histidine 16, histidine 41, glutamate 74, histidine 102, histidine 132, aspartate 193, and histidine 195.

It belongs to the PHP family. Zn(2+) is required as a cofactor.

This is Probable phosphatase Shew185_1467 from Shewanella baltica (strain OS185).